Consider the following 314-residue polypeptide: Quinolinate synthase (314 aa).

Positions 27 and 44 each coordinate iminosuccinate. Cys89 contributes to the [4Fe-4S] cluster binding site. Iminosuccinate-binding positions include 115-117 (YIN) and Ser132. Residue Cys175 participates in [4Fe-4S] cluster binding. Residues 201–203 (HPE) and Thr218 each bind iminosuccinate. Cys271 serves as a coordination point for [4Fe-4S] cluster.

The protein belongs to the quinolinate synthase family. Type 2 subfamily. The cofactor is [4Fe-4S] cluster.

The protein localises to the cytoplasm. It carries out the reaction iminosuccinate + dihydroxyacetone phosphate = quinolinate + phosphate + 2 H2O + H(+). It participates in cofactor biosynthesis; NAD(+) biosynthesis; quinolinate from iminoaspartate: step 1/1. Its function is as follows. Catalyzes the condensation of iminoaspartate with dihydroxyacetone phosphate to form quinolinate. This is Quinolinate synthase from Ehrlichia chaffeensis (strain ATCC CRL-10679 / Arkansas).